The primary structure comprises 342 residues: Polygalacturonase inhibitor 3 (342 aa).

The signal sequence occupies residues 1–29 (MTQFNIPVTMSSSLSIILVILVSLRTALS). Intrachain disulfides connect Cys32/Cys62 and Cys63/Cys72. A glycan (N-linked (GlcNAc...) asparagine) is linked at Asn64. LRR repeat units follow at residues 82-107 (NNLDLSGHNLPKPYPIPSSLANLPYL), 108-132 (NFLYIGGINNLVGPIPPAIAKLTQL), 133-156 (HYLYITHTNVSGAIPDFLSQIKTL), 157-180 (VTLDFSYNALSGTLPPSISSLPNL), 181-205 (VGITFDGNRISGAIPDSYGSFSKLF), 206-228 (TSMTISRNRLTGKIPPTFANLNL), 229-252 (AFVDLSRNMLQGDASVLFGSDKNT), 253-275 (QKIHLAKNSLDFDLEKVGLSKNL), 276-299 (NGLDLRNNRIYGTLPQGLTQLKFL), and 300-319 (HSLNVSFNNLCGEIPQGGNL). Asn141 carries N-linked (GlcNAc...) asparagine glycosylation. The N-linked (GlcNAc...) asparagine glycan is linked to Asn303. 2 cysteine pairs are disulfide-bonded: Cys310/Cys332 and Cys334/Cys341.

The protein belongs to the polygalacturonase-inhibiting protein family. In terms of tissue distribution, found in suspension-cultured cells and to a lesser extent in hypocotyls, leaves and flowers.

The protein localises to the secreted. It is found in the cell wall. Its subcellular location is the membrane. Inhibitor of fungal polygalacturonase. It is an important factor for plant resistance to phytopathogenic fungi. The chain is Polygalacturonase inhibitor 3 (PGIP3) from Phaseolus vulgaris (Kidney bean).